The chain runs to 311 residues: tRNA-cytidine(32) 2-sulfurtransferase (311 aa).

The PP-loop motif signature appears at 47 to 52; sequence SGGKDS. Cys122, Cys125, and Cys213 together coordinate [4Fe-4S] cluster.

It belongs to the TtcA family. In terms of assembly, homodimer. Requires Mg(2+) as cofactor. [4Fe-4S] cluster serves as cofactor.

The protein resides in the cytoplasm. It catalyses the reaction cytidine(32) in tRNA + S-sulfanyl-L-cysteinyl-[cysteine desulfurase] + AH2 + ATP = 2-thiocytidine(32) in tRNA + L-cysteinyl-[cysteine desulfurase] + A + AMP + diphosphate + H(+). Its pathway is tRNA modification. Catalyzes the ATP-dependent 2-thiolation of cytidine in position 32 of tRNA, to form 2-thiocytidine (s(2)C32). The sulfur atoms are provided by the cysteine/cysteine desulfurase (IscS) system. The protein is tRNA-cytidine(32) 2-sulfurtransferase of Escherichia coli O157:H7.